A 71-amino-acid chain; its full sequence is uncharacterized protein (71 aa).

It is found in the plastid. Its subcellular location is the chloroplast. This is an uncharacterized protein from Mesostigma viride (Green alga).